The following is a 428-amino-acid chain: Serine--tRNA ligase (428 aa).

Thr231–Glu233 serves as a coordination point for L-serine. Arg262–Glu264 provides a ligand contact to ATP. Residue Glu285 participates in L-serine binding. Residue Glu349–Ser352 coordinates ATP. Position 385 (Ser385) interacts with L-serine.

Belongs to the class-II aminoacyl-tRNA synthetase family. Type-1 seryl-tRNA synthetase subfamily. As to quaternary structure, homodimer. The tRNA molecule binds across the dimer.

It is found in the cytoplasm. It carries out the reaction tRNA(Ser) + L-serine + ATP = L-seryl-tRNA(Ser) + AMP + diphosphate + H(+). The catalysed reaction is tRNA(Sec) + L-serine + ATP = L-seryl-tRNA(Sec) + AMP + diphosphate + H(+). Its pathway is aminoacyl-tRNA biosynthesis; selenocysteinyl-tRNA(Sec) biosynthesis; L-seryl-tRNA(Sec) from L-serine and tRNA(Sec): step 1/1. Catalyzes the attachment of serine to tRNA(Ser). Is also able to aminoacylate tRNA(Sec) with serine, to form the misacylated tRNA L-seryl-tRNA(Sec), which will be further converted into selenocysteinyl-tRNA(Sec). In Staphylococcus aureus (strain bovine RF122 / ET3-1), this protein is Serine--tRNA ligase.